Here is a 418-residue protein sequence, read N- to C-terminus: Nickel and cobalt resistance protein CnrC (418 aa).

The first 29 residues, 1-29 (MKQVISSFLCRPRFVGSAIWLLPVALSHA), serve as a signal peptide directing secretion.

Belongs to the outer membrane factor (OMF) (TC 1.B.17) family.

In terms of biological role, the products of the genes cnrA, cnrB, and cnrC are likely to form a membrane-bound protein complex catalyzing an energy-dependent efflux of Ni(2+) and Co(2+). The mechanism of action of the CnrCBA complex may be that of a proton/cation antiporter. This is Nickel and cobalt resistance protein CnrC (cnrC) from Cupriavidus metallidurans (strain ATCC 43123 / DSM 2839 / NBRC 102507 / CH34) (Ralstonia metallidurans).